The sequence spans 253 residues: Large ribosomal subunit protein uL10m (253 aa).

Residues 1-24 (MANLMQRSLPLTTTRTPVLQFLRF) constitute a mitochondrion transit peptide.

Belongs to the universal ribosomal protein uL10 family. In terms of assembly, component of the mitochondrial ribosome large subunit (39S) which comprises a 16S rRNA and about 50 distinct proteins.

The protein localises to the mitochondrion. The chain is Large ribosomal subunit protein uL10m (mRpL10) from Drosophila pseudoobscura pseudoobscura (Fruit fly).